The following is a 363-amino-acid chain: Fructose-bisphosphate aldolase C-B (363 aa).

Residues Arg-56 and Lys-147 each coordinate substrate. The active-site Proton acceptor is the Glu-188. Lys-230 (schiff-base intermediate with dihydroxyacetone-P) is an active-site residue.

Belongs to the class I fructose-bisphosphate aldolase family. Homotetramer.

It catalyses the reaction beta-D-fructose 1,6-bisphosphate = D-glyceraldehyde 3-phosphate + dihydroxyacetone phosphate. It functions in the pathway carbohydrate degradation; glycolysis; D-glyceraldehyde 3-phosphate and glycerone phosphate from D-glucose: step 4/4. The chain is Fructose-bisphosphate aldolase C-B (aldocb) from Danio rerio (Zebrafish).